We begin with the raw amino-acid sequence, 714 residues long: WD repeat and coiled-coil-containing protein (714 aa).

WD repeat units lie at residues 55 to 98 (GQFE…LEQN) and 154 to 194 (KGSG…LVPC). 2 disordered regions span residues 432 to 454 (EESTTKSESPSQHHGIRRHSENF) and 531 to 564 (QASRDSSRPCSPRYETSEKLYSDATPPKNSKEKN). Positions 567–595 (QLTQNMERIFTRFAEVQQCLSEIREFTQN) form a coiled coil. A disordered region spans residues 685–714 (RSARRKSPARPPSGADDFPPESPKSPSMEK).

The sequence is that of WD repeat and coiled-coil-containing protein (wdcp) from Danio rerio (Zebrafish).